Here is a 239-residue protein sequence, read N- to C-terminus: MGHKVHPIGIRLGISADWNSKWYANKAEFARYLAADLKVRQVLRKKMSQAGISKILIERPSNTACVSMHVARPGVVIGKRGEDIEMLRKQVSDIMGVPVHINVIEVRKPELDAQLVAESVAQQLERRIMFRRAMKRSVSNAIRLGALGIKISVAGRLNGAEIARSEWYREGRVPLQTLRADIGYGFSEAYTNYGVTGVKVLMYHGDIFSFSSVSQEKQDDGSRGDRNADRSSRRSREVR.

The KH type-2 domain occupies 39–107; that stretch reads VRQVLRKKMS…PVHINVIEVR (69 aa). Positions 214-239 are disordered; sequence SQEKQDDGSRGDRNADRSSRRSREVR. The span at 216-239 shows a compositional bias: basic and acidic residues; the sequence is EKQDDGSRGDRNADRSSRRSREVR.

This sequence belongs to the universal ribosomal protein uS3 family. In terms of assembly, part of the 30S ribosomal subunit. Forms a tight complex with proteins S10 and S14.

Binds the lower part of the 30S subunit head. Binds mRNA in the 70S ribosome, positioning it for translation. The sequence is that of Small ribosomal subunit protein uS3 from Xylella fastidiosa (strain M23).